A 262-amino-acid chain; its full sequence is Thiazole synthase (262 aa).

Lys-105 acts as the Schiff-base intermediate with DXP in catalysis. 1-deoxy-D-xylulose 5-phosphate-binding positions include Gly-166, Ala-192 to Gly-193, and Asn-214 to Thr-215.

It belongs to the ThiG family. In terms of assembly, homotetramer. Forms heterodimers with either ThiH or ThiS.

It localises to the cytoplasm. The enzyme catalyses [ThiS sulfur-carrier protein]-C-terminal-Gly-aminoethanethioate + 2-iminoacetate + 1-deoxy-D-xylulose 5-phosphate = [ThiS sulfur-carrier protein]-C-terminal Gly-Gly + 2-[(2R,5Z)-2-carboxy-4-methylthiazol-5(2H)-ylidene]ethyl phosphate + 2 H2O + H(+). The protein operates within cofactor biosynthesis; thiamine diphosphate biosynthesis. In terms of biological role, catalyzes the rearrangement of 1-deoxy-D-xylulose 5-phosphate (DXP) to produce the thiazole phosphate moiety of thiamine. Sulfur is provided by the thiocarboxylate moiety of the carrier protein ThiS. In vitro, sulfur can be provided by H(2)S. This chain is Thiazole synthase, found in Phenylobacterium zucineum (strain HLK1).